The primary structure comprises 446 residues: Eukaryotic translation initiation factor 3 subunit E (446 aa).

Residues 256 to 425 form the PCI domain; sequence TDLFFSPAYI…GTVIMNHPPQ (170 aa).

The protein belongs to the eIF-3 subunit E family. In terms of assembly, component of the eukaryotic translation initiation factor 3 (eIF-3) complex.

Its subcellular location is the cytoplasm. In terms of biological role, component of the eukaryotic translation initiation factor 3 (eIF-3) complex, which is involved in protein synthesis of a specialized repertoire of mRNAs and, together with other initiation factors, stimulates binding of mRNA and methionyl-tRNAi to the 40S ribosome. The eIF-3 complex specifically targets and initiates translation of a subset of mRNAs involved in cell proliferation. This Aspergillus terreus (strain NIH 2624 / FGSC A1156) protein is Eukaryotic translation initiation factor 3 subunit E (int6).